The sequence spans 1170 residues: Short transient receptor potential channel 2 (1170 aa).

Topologically, residues 1 to 627 are cytoplasmic; sequence MLMSLTDSKE…GWRGSTTIWK (627 aa). Disordered regions lie at residues 64 to 113, 142 to 231, and 322 to 342; these read SLSD…QTST, AHKA…QATG, and ESGS…VEES. Residues 74–85 show a composition bias toward polar residues; the sequence is SPGSSGLNQNSS. Residues 158 to 177 show a composition bias toward basic and acidic residues; sequence GEPDSSHPERAEPRAEEPNR. 4 ANK repeats span residues 300 to 329, 346 to 376, 377 to 405, and 429 to 458; these read KFPP…DPSG, SWRE…DFRQ, IHEA…REKG, and PGVT…TIAR. Residues 628–648 form a helical membrane-spanning segment; it reads LFVAFLIFLTMPFLCIGYWLA. At 649 to 658 the chain is on the extracellular side; that stretch reads PKSRLGRLLK. A helical membrane pass occupies residues 659–679; sequence IPVLKFLLHSASYLWFLIFLL. Over 680–701 the chain is Cytoplasmic; it reads GESLVMETQLSTFKGRSQSVWE. Residues 702–722 form a helical membrane-spanning segment; the sequence is TSLHMIWVTGFLWFECKEVWI. At 723–737 the chain is on the extracellular side; sequence EGLRSYLLDWWNFLD. Residues 738–758 form a helical membrane-spanning segment; it reads VVILSLYLASFALRLLLAGLA. Topologically, residues 759-788 are cytoplasmic; it reads YMHCRDASDSSTCRYFTTAERSEWRTEDPQ. Residues 789 to 809 form a helical membrane-spanning segment; it reads FLAEVLFAVTSMLSFTRLAYI. The Extracellular segment spans residues 810-832; the sequence is LPAHESLGTLQISIGKMIDDMIR. Residues 833 to 853 traverse the membrane as a helical segment; it reads FMFILMIILTAFLCGLNNIYV. The Cytoplasmic portion of the chain corresponds to 854-898; sequence PYQETEKLGNFNETFQFLFWTMFGMEEHSVVDMPQFLVPEFVGRA. Residues 899–919 traverse the membrane as a helical segment; it reads MYGIFTIVMVIVLLNMLIAMI. Residues 920–1170 lie on the Extracellular side of the membrane; that stretch reads TNSFQKIEDD…GEDLETKGES (251 aa). The stretch at 1030–1068 forms a coiled coil; sequence RREFEETRRKDLGNRLTELTKTVSRLQSEVASVQKTVAA. Positions 1118–1170 are disordered; that stretch reads LEDSLDATGEAGTPASGESSSSSSAHVLVHREQEAEGAGDLPLGEDLETKGES.

The protein belongs to the transient receptor (TC 1.A.4) family. STrpC subfamily. TRPC2 sub-subfamily. Expressed exclusively in vomeronasal organ neurons (sensory microvilli).

The protein localises to the membrane. Functionally, thought to form a receptor-activated calcium permeant cation channel. Probably is operated by a phosphatidylinositol second messenger system activated by receptor tyrosine kinases or G-protein coupled receptors. Is not activated by intracellular calcium store depletion. The chain is Short transient receptor potential channel 2 (Trpc2) from Rattus norvegicus (Rat).